The sequence spans 150 residues: Cell division protein SepF (150 aa).

The protein belongs to the SepF family. Homodimer. Interacts with FtsZ.

The protein resides in the cytoplasm. Its function is as follows. Cell division protein that is part of the divisome complex and is recruited early to the Z-ring. Probably stimulates Z-ring formation, perhaps through the cross-linking of FtsZ protofilaments. Its function overlaps with FtsA. The sequence is that of Cell division protein SepF from Clostridium botulinum (strain Kyoto / Type A2).